A 25-amino-acid chain; its full sequence is Caerin-1.18 (25 aa).

Leu25 carries the post-translational modification Leucine amide.

As to expression, expressed by the skin dorsal glands.

The protein localises to the secreted. In terms of biological role, shows significant activity against Gram-positive organisms, but is less effective against Gram-negative organisms. This is Caerin-1.18 from Ranoidea gracilenta (Dainty green tree frog).